We begin with the raw amino-acid sequence, 183 residues long: Peptide deformylase (183 aa).

Residues Cys-90 and His-132 each coordinate Fe cation. Glu-133 is an active-site residue. His-136 lines the Fe cation pocket.

This sequence belongs to the polypeptide deformylase family. Fe(2+) is required as a cofactor.

The catalysed reaction is N-terminal N-formyl-L-methionyl-[peptide] + H2O = N-terminal L-methionyl-[peptide] + formate. Its function is as follows. Removes the formyl group from the N-terminal Met of newly synthesized proteins. Requires at least a dipeptide for an efficient rate of reaction. N-terminal L-methionine is a prerequisite for activity but the enzyme has broad specificity at other positions. This is Peptide deformylase from Parafrankia sp. (strain EAN1pec).